The primary structure comprises 114 residues: Large ribosomal subunit protein bL19 (114 aa).

This sequence belongs to the bacterial ribosomal protein bL19 family.

Its function is as follows. This protein is located at the 30S-50S ribosomal subunit interface and may play a role in the structure and function of the aminoacyl-tRNA binding site. The chain is Large ribosomal subunit protein bL19 from Thermobifida fusca (strain YX).